Here is a 171-residue protein sequence, read N- to C-terminus: Small ribosomal subunit protein uS13 (171 aa).

Disordered stretches follow at residues 1 to 22 and 142 to 171; these read MGKA…AAKK and RHEK…RKKE. Over residues 10–22 the composition is skewed to basic and acidic residues; that stretch reads KSDKEAAKPAAKK. Residues 142-158 are compositionally biased toward basic residues; sequence RHEKGKKVRGQRTRSNG.

The protein belongs to the universal ribosomal protein uS13 family. Part of the 30S ribosomal subunit. Forms a loose heterodimer with protein S19. Forms two bridges to the 50S subunit in the 70S ribosome.

Functionally, located at the top of the head of the 30S subunit, it contacts several helices of the 16S rRNA. In the 70S ribosome it contacts the 23S rRNA (bridge B1a) and protein L5 of the 50S subunit (bridge B1b), connecting the 2 subunits; these bridges are implicated in subunit movement. This Thermoplasma volcanium (strain ATCC 51530 / DSM 4299 / JCM 9571 / NBRC 15438 / GSS1) protein is Small ribosomal subunit protein uS13.